Consider the following 30-residue polypeptide: Trypsin inhibitor 3 (30 aa).

3 cysteine pairs are disulfide-bonded: Cys4/Cys21, Cys11/Cys23, and Cys17/Cys29.

This sequence belongs to the protease inhibitor I7 (squash-type serine protease inhibitor) family.

Its subcellular location is the secreted. In terms of biological role, inhibits trypsin. In Momordica charantia (Bitter gourd), this protein is Trypsin inhibitor 3.